Here is a 451-residue protein sequence, read N- to C-terminus: UDP-N-acetylmuramoylalanine--D-glutamate ligase (451 aa).

Glycine 120–threonine 126 is an ATP binding site.

Belongs to the MurCDEF family.

The protein resides in the cytoplasm. The catalysed reaction is UDP-N-acetyl-alpha-D-muramoyl-L-alanine + D-glutamate + ATP = UDP-N-acetyl-alpha-D-muramoyl-L-alanyl-D-glutamate + ADP + phosphate + H(+). It participates in cell wall biogenesis; peptidoglycan biosynthesis. Its function is as follows. Cell wall formation. Catalyzes the addition of glutamate to the nucleotide precursor UDP-N-acetylmuramoyl-L-alanine (UMA). The polypeptide is UDP-N-acetylmuramoylalanine--D-glutamate ligase (murD) (Bacillus subtilis (strain 168)).